An 861-amino-acid polypeptide reads, in one-letter code: DNA mismatch repair protein MutS (861 aa).

618–625 (GPNMGGKS) is an ATP binding site.

It belongs to the DNA mismatch repair MutS family.

This protein is involved in the repair of mismatches in DNA. It is possible that it carries out the mismatch recognition step. This protein has a weak ATPase activity. In Shewanella sp. (strain ANA-3), this protein is DNA mismatch repair protein MutS.